The primary structure comprises 100 residues: Urease subunit gamma (100 aa).

Belongs to the urease gamma subunit family. As to quaternary structure, heterotrimer of UreA (gamma), UreB (beta) and UreC (alpha) subunits. Three heterotrimers associate to form the active enzyme.

The protein localises to the cytoplasm. The enzyme catalyses urea + 2 H2O + H(+) = hydrogencarbonate + 2 NH4(+). The protein operates within nitrogen metabolism; urea degradation; CO(2) and NH(3) from urea (urease route): step 1/1. This is Urease subunit gamma from Synechococcus sp. (strain CC9902).